Consider the following 458-residue polypeptide: Sulfite exporter TauE/SafE family protein 2 (458 aa).

12 helical membrane passes run 5 to 25 (FVPI…EQEP), 53 to 73 (IELT…SSIS), 74 to 94 (SAGG…VAGL), 101 to 121 (SFSA…NLFV), 128 to 148 (GKTL…LLGV), 150 to 170 (IGVI…FAVF), 227 to 247 (FPWI…AVYL), 267 to 287 (YWLI…WICF), 324 to 344 (VMAL…GMLI), 348 to 368 (LLQV…MVLF), 386 to 406 (GTAS…LKVV), and 418 to 438 (IIVF…TSYG).

It belongs to the 4-toluene sulfonate uptake permease (TSUP) (TC 2.A.102) family.

It is found in the membrane. The sequence is that of Sulfite exporter TauE/SafE family protein 2 from Arabidopsis thaliana (Mouse-ear cress).